Here is a 1448-residue protein sequence, read N- to C-terminus: Gag-Pol polyprotein (1448 aa).

The N-myristoyl glycine; by host moiety is linked to residue Gly-2. The Nuclear export signal signature appears at 16 to 22 (LEKIRLR). Residues 26 to 32 (KKKYMLK) carry the Nuclear localization signal motif. Over residues 218–227 (HPQQAPQQGQ) the composition is skewed to low complexity. The interval 218–237 (HPQQAPQQGQLREPSGSDIA) is disordered. 2 CCHC-type zinc fingers span residues 391-408 (IKCW…QCRA) and 412-429 (QGCW…KCPN). The tract at residues 440 to 461 (LGKEAPQFPHGSSASGADANCS) is disordered. One can recognise a Peptidase A2 domain in the interval 517 to 586 (VEVLLDTGAD…TPINIFGRNL (70 aa)). Asp-522 (for protease activity; shared with dimeric partner) is an active-site residue. Residues 640 to 830 (DGQLEEAPPT…PPFQWMGYEL (191 aa)) form the Reverse transcriptase domain. The Mg(2+) site is built by Asp-706, Asp-781, and Asp-782. The tract at residues 823–831 (FQWMGYELW) is RT 'primer grip'. The Tryptophan repeat motif signature appears at 993 to 1009 (WEQWWTDYWQVTWIPEW). In terms of domain architecture, RNase H type-1 spans 1029-1152 (IEGEETYYVD…IDHLVSQGIR (124 aa)). Residues Asp-1038, Glu-1073, Asp-1093, and Asp-1144 each coordinate Mg(2+). The segment at 1158-1199 (EKIEPAQEEHSKYHSNIKELVFKFGLPRLVAKQIVDTCDKCH) adopts an Integrase-type zinc-finger fold. Residues His-1167, His-1171, Cys-1195, and Cys-1198 each coordinate Zn(2+). The region spanning 1209-1359 (VNSDLGTWQM…TPAERLINMI (151 aa)) is the Integrase catalytic domain. Mg(2+) contacts are provided by Asp-1219 and Asp-1271. The segment at residues 1378 to 1425 (FRVYYREGRDQLWKGPGELLWKGEGAVILKVGTDIKVVPRRKAKIIKD) is a DNA-binding region (integrase-type). Residues 1426 to 1448 (YGGGKEMDSSSHMEDTGEAREVA) are disordered.

Homotrimer. Interacts with gp41 (via C-terminus). In terms of assembly, homodimer. The active site consists of two apposed aspartic acid residues. As to quaternary structure, heterodimer of p66 RT and p51 RT (RT p66/p51). Heterodimerization of RT is essential for DNA polymerase activity. Despite the sequence identities, p66 RT and p51 RT have distinct folding. Homotetramer; may further associate as a homohexadecamer. The cofactor is Mg(2+). Specific enzymatic cleavages by the viral protease yield mature proteins. The protease is released by autocatalytic cleavage. The polyprotein is cleaved during and after budding, this process is termed maturation. Proteolytic cleavage of p66 RT removes the RNase H domain to yield the p51 RT subunit. Post-translationally, capsid protein p24 is phosphorylated.

Its subcellular location is the virion. It is found in the host nucleus. It localises to the host cytoplasm. The protein resides in the host cell membrane. It catalyses the reaction Specific for a P1 residue that is hydrophobic, and P1' variable, but often Pro.. The catalysed reaction is Endohydrolysis of RNA in RNA/DNA hybrids. Three different cleavage modes: 1. sequence-specific internal cleavage of RNA. Human immunodeficiency virus type 1 and Moloney murine leukemia virus enzymes prefer to cleave the RNA strand one nucleotide away from the RNA-DNA junction. 2. RNA 5'-end directed cleavage 13-19 nucleotides from the RNA end. 3. DNA 3'-end directed cleavage 15-20 nucleotides away from the primer terminus.. It carries out the reaction 3'-end directed exonucleolytic cleavage of viral RNA-DNA hybrid.. The enzyme catalyses DNA(n) + a 2'-deoxyribonucleoside 5'-triphosphate = DNA(n+1) + diphosphate. The viral protease is inhibited by many synthetic protease inhibitors (PIs), such as amprenavir, atazanavir, indinavir, loprinavir, nelfinavir, ritonavir and saquinavir. RT can be inhibited either by nucleoside RT inhibitors (NRTIs) or by non nucleoside RT inhibitors (NNRTIs). NRTIs act as chain terminators, whereas NNRTIs inhibit DNA polymerization by binding a small hydrophobic pocket near the RT active site and inducing an allosteric change in this region. Classical NRTIs are abacavir, adefovir (PMEA), didanosine (ddI), lamivudine (3TC), stavudine (d4T), tenofovir (PMPA), zalcitabine (ddC), and zidovudine (AZT). Classical NNRTIs are atevirdine (BHAP U-87201E), delavirdine, efavirenz (DMP-266), emivirine (I-EBU), and nevirapine (BI-RG-587). The tritherapies used as a basic effective treatment of AIDS associate two NRTIs and one NNRTI. Use of protease inhibitors in tritherapy regimens permit more ambitious therapeutic strategies. Its function is as follows. Gag-Pol polyprotein and Gag polyprotein may regulate their own translation, by the binding genomic RNA in the 5'-UTR. At low concentration, Gag-Pol and Gag would promote translation, whereas at high concentration, the polyproteins encapsidate genomic RNA and then shut off translation. Matrix protein p17 has two main functions: in infected cell, it targets Gag and Gag-pol polyproteins to the plasma membrane via a multipartite membrane-binding signal, that includes its myristointegration complex. The myristoylation signal and the NLS exert conflicting influences its subcellular localization. The key regulation of these motifs might be phosphorylation of a portion of MA molecules on the C-terminal tyrosine at the time of virus maturation, by virion-associated cellular tyrosine kinase. Implicated in the release from host cell mediated by Vpu. Functionally, capsid protein p24 forms the conical core that encapsulates the genomic RNA-nucleocapsid complex in the virion. The core is constituted by capsid protein hexamer subunits. The core is disassembled soon after virion entry. Interaction with host PPIA/CYPA protects the virus from restriction by host TRIM5-alpha and from an unknown antiviral activity in host cells. This capsid restriction by TRIM5 is one of the factors which restricts SIV to the simian species. In terms of biological role, nucleocapsid protein p7 encapsulates and protects viral dimeric unspliced (genomic) RNA. Binds these RNAs through its zinc fingers. Facilitates rearangement of nucleic acid secondary structure during retrotranscription of genomic RNA. This capability is referred to as nucleic acid chaperone activity. Its function is as follows. The aspartyl protease mediates proteolytic cleavages of Gag and Gag-Pol polyproteins during or shortly after the release of the virion from the plasma membrane. Cleavages take place as an ordered, step-wise cascade to yield mature proteins. This process is called maturation. Displays maximal activity during the budding process just prior to particle release from the cell. Also cleaves Nef and Vif, probably concomitantly with viral structural proteins on maturation of virus particles. Hydrolyzes host EIF4GI and PABP1 in order to shut off the capped cellular mRNA translation. The resulting inhibition of cellular protein synthesis serves to ensure maximal viral gene expression and to evade host immune response. Reverse transcriptase/ribonuclease H (RT) is a multifunctional enzyme that converts the viral dimeric RNA genome into dsDNA in the cytoplasm, shortly after virus entry into the cell. This enzyme displays a DNA polymerase activity that can copy either DNA or RNA templates, and a ribonuclease H (RNase H) activity that cleaves the RNA strand of RNA-DNA heteroduplexes in a partially processive 3' to 5' endonucleasic mode. Conversion of viral genomic RNA into dsDNA requires many steps. A tRNA binds to the primer-binding site (PBS) situated at the 5'-end of the viral RNA. RT uses the 3' end of the tRNA primer to perform a short round of RNA-dependent minus-strand DNA synthesis. The reading proceeds through the U5 region and ends after the repeated (R) region which is present at both ends of viral RNA. The portion of the RNA-DNA heteroduplex is digested by the RNase H, resulting in a ssDNA product attached to the tRNA primer. This ssDNA/tRNA hybridizes with the identical R region situated at the 3' end of viral RNA. This template exchange, known as minus-strand DNA strong stop transfer, can be either intra- or intermolecular. RT uses the 3' end of this newly synthesized short ssDNA to perform the RNA-dependent minus-strand DNA synthesis of the whole template. RNase H digests the RNA template except for two polypurine tracts (PPTs) situated at the 5'-end and near the center of the genome. It is not clear if both polymerase and RNase H activities are simultaneous. RNase H can probably proceed both in a polymerase-dependent (RNA cut into small fragments by the same RT performing DNA synthesis) and a polymerase-independent mode (cleavage of remaining RNA fragments by free RTs). Secondly, RT performs DNA-directed plus-strand DNA synthesis using the PPTs that have not been removed by RNase H as primers. PPTs and tRNA primers are then removed by RNase H. The 3' and 5' ssDNA PBS regions hybridize to form a circular dsDNA intermediate. Strand displacement synthesis by RT to the PBS and PPT ends produces a blunt ended, linear dsDNA copy of the viral genome that includes long terminal repeats (LTRs) at both ends. Functionally, integrase catalyzes viral DNA integration into the host chromosome, by performing a series of DNA cutting and joining reactions. This enzyme activity takes place after virion entry into a cell and reverse transcription of the RNA genome in dsDNA. The first step in the integration process is 3' processing. This step requires a complex comprising the viral genome, matrix protein, Vpr and integrase. This complex is called the pre-integration complex (PIC). The integrase protein removes 2 nucleotides from each 3' end of the viral DNA, leaving recessed CA OH's at the 3' ends. In the second step, the PIC enters cell nucleus. This process is mediated through integrase and Vpr proteins, and allows the virus to infect a non dividing cell. This ability to enter the nucleus is specific of lentiviruses, other retroviruses cannot and rely on cell division to access cell chromosomes. In the third step, termed strand transfer, the integrase protein joins the previously processed 3' ends to the 5' ends of strands of target cellular DNA at the site of integration. The 5'-ends are produced by integrase-catalyzed staggered cuts, 5 bp apart. A Y-shaped, gapped, recombination intermediate results, with the 5'-ends of the viral DNA strands and the 3' ends of target DNA strands remaining unjoined, flanking a gap of 5 bp. The last step is viral DNA integration into host chromosome. This involves host DNA repair synthesis in which the 5 bp gaps between the unjoined strands are filled in and then ligated. Since this process occurs at both cuts flanking the SIV genome, a 5 bp duplication of host DNA is produced at the ends of SIV integration. Alternatively, Integrase may catalyze the excision of viral DNA just after strand transfer, this is termed disintegration. The polypeptide is Gag-Pol polyprotein (gag-pol) (Cercopithecidae (Old World monkeys)).